The following is a 435-amino-acid chain: Histone acetyltransferase type B subunit 2 (435 aa).

5 WD repeats span residues 135–175 (NHAG…SKAP), 188–228 (GQTK…KQDP), 238–278 (GHSA…TAKA), 284–324 (GHNA…TKHH), and 328–368 (AHTN…AEQT). Residues 370–374 (DDAED) form an interaction with the histone H4 N-terminus region. A WD 6 repeat occupies 385–425 (GHTSKVCDISWSPSSPWTIASASEDNILQVWEPSRHLRTPY).

The protein belongs to the WD repeat RBAP46/RBAP48/MSI1 family. Component of the HAT-B complex composed of at least HAT1 and HAT2. The HAT-B complex binds to histone H4 tail.

It localises to the cytoplasm. The protein localises to the nucleus. Its function is as follows. Regulatory subunit of the histone acetylase B (HAT-B) complex. The complex acetylates 'Lys-12' of histone H4 which is required for telomeric silencing. In Cryptococcus neoformans var. neoformans serotype D (strain B-3501A) (Filobasidiella neoformans), this protein is Histone acetyltransferase type B subunit 2 (HAT2).